Here is a 107-residue protein sequence, read N- to C-terminus: UPF0060 membrane protein PSHAa1175 (107 aa).

The next 4 membrane-spanning stretches (helical) occupy residues 3–23 (IFGL…LPYL), 30–50 (SVWL…LLSL), 60–80 (AAYG…VDGI), and 84–104 (TWDL…MFAP).

This sequence belongs to the UPF0060 family.

The protein resides in the cell inner membrane. The polypeptide is UPF0060 membrane protein PSHAa1175 (Pseudoalteromonas translucida (strain TAC 125)).